The chain runs to 30 residues: Arsenate respiratory reductase iron-sulfur subunit ArrB (30 aa).

The [4Fe-4S] cluster site is built by Cys12, Cys15, Cys18, and Cys22.

Heterodimer composed of one large subunit (ArrA) and one small subunit (ArrB). It depends on [4Fe-4S] cluster as a cofactor.

It localises to the periplasm. Its function is as follows. Component of the arsenate respiratory reductase (Arr) complex, which catalyzes the reduction of arsenate (As(V)) to arsenite (As(III)). ArrB is probably the electron transfer subunit. This Chrysiogenes arsenatis protein is Arsenate respiratory reductase iron-sulfur subunit ArrB.